We begin with the raw amino-acid sequence, 518 residues long: Myosin-binding protein 7 (518 aa).

Residues 69–167 (NELELLRETV…ALTFEAQAYK (99 aa)) enclose the GTD-binding domain. The tract at residues 276 to 350 (VVGQSPRHQR…DSSEIGDNDM (75 aa)) is disordered. The span at 291–301 (STGSASSLLGT) shows a compositional bias: low complexity. Residues 310 to 320 (SNDSPRSNNGS) are compositionally biased toward polar residues. Residue S385 is modified to Phosphoserine. The stretch at 399 to 431 (EISKLYMRLQALEADRESMRQAIMSMRTEKAQM) forms a coiled coil. The helical transmembrane segment at 458–477 (IIGAFNFISVFKWITSFVFW) threads the bilayer.

Interacts with myosin XI-I.

It localises to the endomembrane system. Functionally, membrane-anchored myosin receptors that define a distinct, plant-specific transport vesicle compartment. The sequence is that of Myosin-binding protein 7 from Arabidopsis thaliana (Mouse-ear cress).